The sequence spans 229 residues: Ribose-5-phosphate isomerase A (229 aa).

Substrate contacts are provided by residues 28–31, 85–88, and 98–101; these read TGST, DGAD, and KGRG. Glu107 acts as the Proton acceptor in catalysis. Lys125 serves as a coordination point for substrate.

This sequence belongs to the ribose 5-phosphate isomerase family. As to quaternary structure, homotetramer.

It catalyses the reaction aldehydo-D-ribose 5-phosphate = D-ribulose 5-phosphate. The protein operates within carbohydrate degradation; pentose phosphate pathway; D-ribose 5-phosphate from D-ribulose 5-phosphate (non-oxidative stage): step 1/1. Its activity is regulated as follows. Inhibited by D-4-phosphoerythronic acid. Its function is as follows. Involved in the first step of the non-oxidative branch of the pentose phosphate pathway. It catalyzes the reversible conversion of ribose-5-phosphate to ribulose 5-phosphate. This chain is Ribose-5-phosphate isomerase A, found in Pyrococcus horikoshii (strain ATCC 700860 / DSM 12428 / JCM 9974 / NBRC 100139 / OT-3).